The sequence spans 306 residues: Ornithine carbamoyltransferase (306 aa).

Residues 53–56 (STRT), Gln80, Arg104, and 131–134 (HPCQ) each bind carbamoyl phosphate. L-ornithine contacts are provided by residues Asn162, Asp219, and 223 to 224 (SM). Carbamoyl phosphate contacts are provided by residues 259–260 (CL) and Arg287.

It belongs to the aspartate/ornithine carbamoyltransferase superfamily. OTCase family.

It is found in the cytoplasm. It carries out the reaction carbamoyl phosphate + L-ornithine = L-citrulline + phosphate + H(+). The protein operates within amino-acid biosynthesis; L-arginine biosynthesis; L-arginine from L-ornithine and carbamoyl phosphate: step 1/3. In terms of biological role, reversibly catalyzes the transfer of the carbamoyl group from carbamoyl phosphate (CP) to the N(epsilon) atom of ornithine (ORN) to produce L-citrulline. The chain is Ornithine carbamoyltransferase from Pseudomonas syringae pv. tomato (strain ATCC BAA-871 / DC3000).